Consider the following 301-residue polypeptide: Putative glycosyltransferase MJ1113 (301 aa).

Transmembrane regions (helical) follow at residues 2–22 (GHYFINLFTYTIIAFIFSAVL), 62–82 (FIPFVNPIFVLPIITAGIIGI), 95–115 (LILLFISGLIIGILFYNNSYV), 117–137 (LIEILIIALGIMISSNLTNML), 140–160 (FNGLEIGMGVIASISLALVLF), 164–184 (YTTGFLSALIFSASYLGLLIF), 191–211 (VFPGDVGTLPIGAFLAVLAVV), and 280–300 (VTVLWIIGIFFGIVGILISLI).

This sequence belongs to the glycosyltransferase 4 family.

It is found in the cell membrane. This Methanocaldococcus jannaschii (strain ATCC 43067 / DSM 2661 / JAL-1 / JCM 10045 / NBRC 100440) (Methanococcus jannaschii) protein is Putative glycosyltransferase MJ1113.